Consider the following 199-residue polypeptide: Puromycin N-acetyltransferase (199 aa).

Residues 6-198 (PTVRLATRDD…RTWCMTRKPG (193 aa)) enclose the N-acetyltransferase domain.

Its function is as follows. Detoxification of puromycin. The chain is Puromycin N-acetyltransferase (pac) from Streptomyces alboniger.